Reading from the N-terminus, the 149-residue chain is SKP1-like protein 14 (149 aa).

The segment at 91 to 149 (LLAANYLNIKGLLDLSAQTVADRIKDKTPEEIREIFNIENDFTPEEEAAVRKENAWAFE) is interaction with the F-box domain of F-box proteins.

The protein belongs to the SKP1 family. As to quaternary structure, part of a SCF (SKP1-cullin-F-box) protein ligase complex. Interacts with CPR1/CPR30, At3g61590, At4g39550 and At5g49610. As to expression, restricted to inflorescences, pollen and leaves.

The protein resides in the nucleus. It functions in the pathway protein modification; protein ubiquitination. In terms of biological role, involved in ubiquitination and subsequent proteasomal degradation of target proteins. Together with CUL1, RBX1 and a F-box protein, it forms a SCF E3 ubiquitin ligase complex. The functional specificity of this complex depends on the type of F-box protein. In the SCF complex, it serves as an adapter that links the F-box protein to CUL1. The polypeptide is SKP1-like protein 14 (ASK14) (Arabidopsis thaliana (Mouse-ear cress)).